Consider the following 556-residue polypeptide: Formate--tetrahydrofolate ligase (556 aa).

Residue 65-72 participates in ATP binding; sequence TPAGEGKS.

Belongs to the formate--tetrahydrofolate ligase family.

It carries out the reaction (6S)-5,6,7,8-tetrahydrofolate + formate + ATP = (6R)-10-formyltetrahydrofolate + ADP + phosphate. Its pathway is one-carbon metabolism; tetrahydrofolate interconversion. In Clostridium novyi (strain NT), this protein is Formate--tetrahydrofolate ligase.